Reading from the N-terminus, the 185-residue chain is Ubiquitin-fold modifier-conjugating enzyme 1 (185 aa).

Cys119 functions as the Glycyl thioester intermediate in the catalytic mechanism.

This sequence belongs to the ubiquitin-conjugating enzyme family. UFC1 subfamily.

Its function is as follows. E2-like enzyme which forms an intermediate with UFM1 via a thioester linkage. This Oryza sativa subsp. japonica (Rice) protein is Ubiquitin-fold modifier-conjugating enzyme 1.